The following is a 172-amino-acid chain: Ribosome maturation factor RimM (172 aa).

Residues 96–168 (DGEFYYHEII…RIEVELMEGL (73 aa)) form the PRC barrel domain.

Belongs to the RimM family. Binds ribosomal protein uS19.

The protein localises to the cytoplasm. Its function is as follows. An accessory protein needed during the final step in the assembly of 30S ribosomal subunit, possibly for assembly of the head region. Essential for efficient processing of 16S rRNA. May be needed both before and after RbfA during the maturation of 16S rRNA. It has affinity for free ribosomal 30S subunits but not for 70S ribosomes. This chain is Ribosome maturation factor RimM, found in Streptococcus thermophilus (strain CNRZ 1066).